The sequence spans 183 residues: MKNVTHSFVFLAHWPSAGSFGLNTNILATNLINLTVVVGVLIFFGKGVLKDLLDNRKQRILSTIRNSEELRRGTIEKLEKARIRLQKVELEADEYRMNGYSDIEREKANLINATSISLEQLEKSKNETLYFEKQRAMNQVRQRVFQQAVQGALGTLNSCLNTELHFRTIRANIGILGSMEWKR.

A helical transmembrane segment spans residues 27 to 49; it reads LATNLINLTVVVGVLIFFGKGVL.

The protein belongs to the ATPase B chain family. In terms of assembly, F-type ATPases have 2 components, F(1) - the catalytic core - and F(0) - the membrane proton channel. F(1) has five subunits: alpha(3), beta(3), gamma(1), delta(1), epsilon(1). F(0) has four main subunits: a(1), b(1), b'(1) and c(10-14). The alpha and beta chains form an alternating ring which encloses part of the gamma chain. F(1) is attached to F(0) by a central stalk formed by the gamma and epsilon chains, while a peripheral stalk is formed by the delta, b and b' chains.

It localises to the plastid. The protein localises to the chloroplast thylakoid membrane. In terms of biological role, f(1)F(0) ATP synthase produces ATP from ADP in the presence of a proton or sodium gradient. F-type ATPases consist of two structural domains, F(1) containing the extramembraneous catalytic core and F(0) containing the membrane proton channel, linked together by a central stalk and a peripheral stalk. During catalysis, ATP synthesis in the catalytic domain of F(1) is coupled via a rotary mechanism of the central stalk subunits to proton translocation. Component of the F(0) channel, it forms part of the peripheral stalk, linking F(1) to F(0). This chain is ATP synthase subunit b, chloroplastic, found in Lolium perenne (Perennial ryegrass).